Reading from the N-terminus, the 377-residue chain is Citrate synthase (377 aa).

Active-site residues include histidine 220, histidine 259, and aspartate 313.

The protein belongs to the citrate synthase family. As to quaternary structure, homodimer.

It catalyses the reaction oxaloacetate + acetyl-CoA + H2O = citrate + CoA + H(+). Its pathway is carbohydrate metabolism; tricarboxylic acid cycle; isocitrate from oxaloacetate: step 1/2. Functionally, might regulate the synthesis and function of enzymes involved in later enzymatic steps of Krebs cycle. Loss in activity results in sporulation defect. The sequence is that of Citrate synthase (gltA) from Deinococcus radiodurans (strain ATCC 13939 / DSM 20539 / JCM 16871 / CCUG 27074 / LMG 4051 / NBRC 15346 / NCIMB 9279 / VKM B-1422 / R1).